Reading from the N-terminus, the 284-residue chain is Efem/EfeO family lipoprotein (284 aa).

An N-terminal signal peptide occupies residues 1–17 (MKKLTTLLLASTLLIAA). A lipid anchor (N-palmitoyl cysteine) is attached at Cys18. A lipid anchor (S-diacylglycerol cysteine) is attached at Cys18.

The protein belongs to the EfeM/EfeO family.

The protein localises to the cell membrane. This is Efem/EfeO family lipoprotein from Staphylococcus aureus (strain MRSA252).